Here is a 373-residue protein sequence, read N- to C-terminus: COP9 signalosome complex subunit 5 (373 aa).

The 136-residue stretch at 66-201 folds into the MPN domain; sequence CLISRLATTK…IGAFRTLPSK (136 aa). Zn(2+) is bound by residues histidine 147, histidine 149, and aspartate 160. Positions 147-160 match the JAMM motif motif; that stretch reads HSHPGYGCWLSNID. The disordered stretch occupies residues 289–325; the sequence is FTHERSNSISSTSSLTTRHTTDVEMDDQESAQSSLDI. Over residues 295–306 the composition is skewed to low complexity; the sequence is NSISSTSSLTTR.

Belongs to the peptidase M67A family. CSN5 subfamily. Component of the COP9 signalosome (CSN) complex.

It is found in the cytoplasm. It localises to the nucleus. In terms of biological role, catalytic Component of the COP9 signalosome (CSN) complex that acts as an regulator of the ubiquitin (Ubl) conjugation pathway by mediating the deneddylation of the cullin subunit of SCF-type E3 ubiquitin-protein ligase complexes. The CNS complex is involved in the regulation of the mating pheromone response. The protein is COP9 signalosome complex subunit 5 (RRI1) of Kluyveromyces lactis (strain ATCC 8585 / CBS 2359 / DSM 70799 / NBRC 1267 / NRRL Y-1140 / WM37) (Yeast).